A 729-amino-acid chain; its full sequence is Elongation factor 2 (729 aa).

Positions 19–262 (EQIRNIAIAA…MVCEHFPNPV (244 aa)) constitute a tr-type G domain. Residues 28–35 (AHVDHGKT), 94–98 (DTPGH), and 148–151 (NKVD) contribute to the GTP site. Position 597 is a diphthamide (His597).

The protein belongs to the TRAFAC class translation factor GTPase superfamily. Classic translation factor GTPase family. EF-G/EF-2 subfamily.

The protein resides in the cytoplasm. Functionally, catalyzes the GTP-dependent ribosomal translocation step during translation elongation. During this step, the ribosome changes from the pre-translocational (PRE) to the post-translocational (POST) state as the newly formed A-site-bound peptidyl-tRNA and P-site-bound deacylated tRNA move to the P and E sites, respectively. Catalyzes the coordinated movement of the two tRNA molecules, the mRNA and conformational changes in the ribosome. The sequence is that of Elongation factor 2 from Natronomonas pharaonis (strain ATCC 35678 / DSM 2160 / CIP 103997 / JCM 8858 / NBRC 14720 / NCIMB 2260 / Gabara) (Halobacterium pharaonis).